The chain runs to 258 residues: MLSRRIIPCLDVRDGRVVKGVRFRDHVDMGDIAELAQRYRDQGADELVFYDIGASPEARSVDVAWIERIARLIDIPFCVAGGIDSVETARRVLFAGADKVSINSPALGRPELITELADEFGVQCVVVGVDSVREADGQWRVRRFSGDPDKTQAVPLRTLDWIVDAQRRGAGEIVLNCMDSDGVRRGYDVVQLQQARALCQVPLIASGGAGAMEHFAEAFDQADVDGALAASVFHSGAIAIPELKRYLRGQQIEVRDVY.

Active-site residues include D11 and D130.

This sequence belongs to the HisA/HisF family. In terms of assembly, heterodimer of HisH and HisF.

Its subcellular location is the cytoplasm. It catalyses the reaction 5-[(5-phospho-1-deoxy-D-ribulos-1-ylimino)methylamino]-1-(5-phospho-beta-D-ribosyl)imidazole-4-carboxamide + L-glutamine = D-erythro-1-(imidazol-4-yl)glycerol 3-phosphate + 5-amino-1-(5-phospho-beta-D-ribosyl)imidazole-4-carboxamide + L-glutamate + H(+). It functions in the pathway amino-acid biosynthesis; L-histidine biosynthesis; L-histidine from 5-phospho-alpha-D-ribose 1-diphosphate: step 5/9. Its function is as follows. IGPS catalyzes the conversion of PRFAR and glutamine to IGP, AICAR and glutamate. The HisF subunit catalyzes the cyclization activity that produces IGP and AICAR from PRFAR using the ammonia provided by the HisH subunit. This chain is Imidazole glycerol phosphate synthase subunit HisF, found in Stenotrophomonas maltophilia (strain R551-3).